The primary structure comprises 391 residues: MAKSKFERNKPHVNIGTIGHVDHGKTSLTAAITKYFGEFKAYDQIDAAPEEKARGITISTAHVEYETPARHYAHVDCPGHADYVKNMITGAAQMDGAILVCSAADGPMPQTREHILLARQVGVPAIVVFLNKVDQVDDAELLELVELEVRELLSSYDFPGDDIPVVKGSALAALEDSDKKIGEDAIRELMAAVDSYIPTPERPVDQPFLMPIEDVFSISGRGTVVTGRVERGIIKVGEEVEIVGIRPTSKTTVTGVEMFRKLLDQGQAGDNIGALIRGVNRDGVERGQILCKPGSVKPHKKFKAEAYILTKEEGGRHTPFFTNYRPQFYFRTTDVTGIVTLPEGTEMVMPGDNVTVDVELIVPIAMEEKLRFAIREGGRTVGAGIVASIVE.

Positions 10-201 (KPHVNIGTIG…AVDSYIPTPE (192 aa)) constitute a tr-type G domain. Residues 19-26 (GHVDHGKT) are G1. A GTP-binding site is contributed by 19-26 (GHVDHGKT). T26 provides a ligand contact to Mg(2+). The interval 55-59 (GITIS) is G2. Residues 76-79 (DCPG) form a G3 region. GTP contacts are provided by residues 76–80 (DCPGH) and 131–134 (NKVD). Positions 131 to 134 (NKVD) are G4. Positions 169–171 (SAL) are G5.

It belongs to the TRAFAC class translation factor GTPase superfamily. Classic translation factor GTPase family. EF-Tu/EF-1A subfamily. Monomer.

The protein resides in the cytoplasm. It carries out the reaction GTP + H2O = GDP + phosphate + H(+). In terms of biological role, GTP hydrolase that promotes the GTP-dependent binding of aminoacyl-tRNA to the A-site of ribosomes during protein biosynthesis. This Rhizobium etli (strain ATCC 51251 / DSM 11541 / JCM 21823 / NBRC 15573 / CFN 42) protein is Elongation factor Tu 1.